Reading from the N-terminus, the 1528-residue chain is Cell surface antigen I/II (1528 aa).

A signal peptide spans 1-50; that stretch reads MLQKCKLEGIIICNEKRLLGAAKVKSGRTLSGALLGTAILASGAGQKALA. The tract at residues 50–156 is disordered; it reads AEETSTTSTS…PEIKDDYSKQ (107 aa). The segment covering 51–68 has biased composition (low complexity); sequence EETSTTSTSGGDTAVVGT. Composition is skewed to polar residues over residues 83–97 and 124–133; these read NPSS…QARQ and TVSQDATVNK. Basic and acidic residues predominate over residues 142-154; the sequence is ANQKEPEIKDDYS. 4 Ag I/II A repeats span residues 161-235, 236-315, 316-396, and 397-478; these read QKAT…QQAN, SDSQ…QAGN, AANE…QSGN, and AANE…KKDL. Disordered stretches follow at residues 840 to 951 and 1459 to 1480; these read VPKV…VEPV and SNTV…PKTT. The span at 855–879 shows a compositional bias: basic and acidic residues; it reads TKPDEPTYEVEKELVDLPVEPKYEP. Residues 1459-1468 show a composition bias toward polar residues; the sequence is SNTVRTSTPE. An LPXTG sorting signal motif is present at residues 1503–1507; sequence LPATG. Residue T1506 is modified to Pentaglycyl murein peptidoglycan amidated threonine. A propeptide spans 1507–1528 (removed by sortase); the sequence is GDSSNAYLPLLGLVSLTAGFSC.

The protein belongs to the antigen I/II family.

It localises to the secreted. The protein localises to the cell wall. This Streptococcus downei (Streptococcus sobrinus) protein is Cell surface antigen I/II.